Consider the following 142-residue polypeptide: Large ribosomal subunit protein uL13 (142 aa).

The protein belongs to the universal ribosomal protein uL13 family. Part of the 50S ribosomal subunit.

In terms of biological role, this protein is one of the early assembly proteins of the 50S ribosomal subunit, although it is not seen to bind rRNA by itself. It is important during the early stages of 50S assembly. This chain is Large ribosomal subunit protein uL13, found in Yersinia pseudotuberculosis serotype O:1b (strain IP 31758).